The sequence spans 94 residues: Acylphosphatase (94 aa).

The Acylphosphatase-like domain occupies arginine 6 to proline 92. Residues arginine 21 and asparagine 39 contribute to the active site.

This sequence belongs to the acylphosphatase family.

The catalysed reaction is an acyl phosphate + H2O = a carboxylate + phosphate + H(+). This chain is Acylphosphatase (acyP), found in Synechococcus sp. (strain JA-2-3B'a(2-13)) (Cyanobacteria bacterium Yellowstone B-Prime).